A 510-amino-acid polypeptide reads, in one-letter code: 2,3-bisphosphoglycerate-independent phosphoglycerate mutase (510 aa).

Residues Asp-15 and Ser-65 each coordinate Mn(2+). The active-site Phosphoserine intermediate is Ser-65. Substrate is bound by residues His-126, 155-156 (RD), Arg-187, Arg-193, 259-262 (RPDR), and Lys-332. Asp-399, His-403, Asp-440, His-441, and His-458 together coordinate Mn(2+).

Belongs to the BPG-independent phosphoglycerate mutase family. Mn(2+) serves as cofactor.

The protein resides in the plastid. It is found in the chloroplast. The catalysed reaction is (2R)-2-phosphoglycerate = (2R)-3-phosphoglycerate. It participates in carbohydrate degradation; glycolysis; pyruvate from D-glyceraldehyde 3-phosphate: step 3/5. Its function is as follows. Catalyzes the interconversion of 2-phosphoglycerate and 3-phosphoglycerate. This Antithamnion sp. (Red alga) protein is 2,3-bisphosphoglycerate-independent phosphoglycerate mutase.